The chain runs to 97 residues: Coiled-coil domain-containing protein 167 (97 aa).

A coiled-coil region spans residues 10–79; sequence GVALEIDGLE…LRQENRKNML (70 aa). Residues 77–97 form a helical membrane-spanning segment; sequence NMLLSVAIFLLLTVIYAYWAL.

The protein localises to the membrane. The sequence is that of Coiled-coil domain-containing protein 167 (CCDC167) from Bos taurus (Bovine).